The chain runs to 343 residues: UPF0157 protein YqkA (343 aa).

One can recognise an N-acetyltransferase domain in the interval 8 to 144; the sequence is KEATIAREIL…VKAAQGLLLS (137 aa). A UPF0157 region spans residues 135-343; sequence VKAAQGLLLS…ENDENGGFTL (209 aa).

In the C-terminal section; belongs to the UPF0157 (GrpB) family.

The protein is UPF0157 protein YqkA (yqkA) of Bacillus subtilis (strain 168).